The sequence spans 42 residues: Phospholipase A1 (42 aa).

This sequence belongs to the AB hydrolase superfamily. Lipase family. Post-translationally, contains six disulfide bonds. Expressed by the venom gland.

Its subcellular location is the secreted. It carries out the reaction a 1,2-diacyl-sn-glycero-3-phosphocholine + H2O = a 2-acyl-sn-glycero-3-phosphocholine + a fatty acid + H(+). Functionally, catalyzes the hydrolysis of phosphatidylcholine with phospholipase A1 activity. May act as an allergen and induce hemolytic activity. The chain is Phospholipase A1 from Polistes gallicus (Paper wasp).